The primary structure comprises 294 residues: MRTEYAARLPVDWRDYVELCKPRVVLLMLLTVIVGMYLAAPGWVSLRLIAFTLLGIGLCAGSAAAINHLVDRHIDSIMARTKKRPVAYGRVSVKQALWFAVIIGLMGLSLLILFVNQLTALLTFVTLIGYAGVYTGYLKRATSQNIVIGGLAGAAPPLLGWTAVTDQLDPQALLLVLIIFTWTPPHFWALAIYRYKEYQDAEIPMLPVTHGIQFTKLNIYLYTVLLLVVSLLPFVVSMSGWIYLLGALVLGIRFLVWAHKLYFTDKPVVAMQTFRFSILYLMLLFVFLLVDHYF.

The next 9 membrane-spanning stretches (helical) occupy residues 24-44, 48-68, 96-116, 118-138, 145-165, 172-192, 224-244, 245-265, and 268-288; these read VVLL…PGWV, LIAF…AINH, ALWF…LFVN, LTAL…TGYL, NIVI…TAVT, ALLL…ALAI, VLLL…WIYL, LGAL…YFTD, and VVAM…FVFL.

Belongs to the UbiA prenyltransferase family. Protoheme IX farnesyltransferase subfamily.

The protein resides in the cell inner membrane. It carries out the reaction heme b + (2E,6E)-farnesyl diphosphate + H2O = Fe(II)-heme o + diphosphate. The protein operates within porphyrin-containing compound metabolism; heme O biosynthesis; heme O from protoheme: step 1/1. Converts heme B (protoheme IX) to heme O by substitution of the vinyl group on carbon 2 of heme B porphyrin ring with a hydroxyethyl farnesyl side group. In Legionella pneumophila (strain Corby), this protein is Protoheme IX farnesyltransferase.